We begin with the raw amino-acid sequence, 256 residues long: ATP synthase peripheral stalk subunit b, mitochondrial (256 aa).

The N-terminal 42 residues, 1 to 42 (MLSRVVLSAAAAAAPSLKNAALLGPGVLQATRIFHTGQPSLA), are a transit peptide targeting the mitochondrion. At Lys131 the chain carries N6-succinyllysine. Residues Lys139, Lys154, Lys162, Lys221, Lys233, and Lys244 each carry the N6-acetyllysine modification.

This sequence belongs to the eukaryotic ATPase B chain family. Component of the ATP synthase complex composed at least of ATP5F1A/subunit alpha, ATP5F1B/subunit beta, ATP5MC1/subunit c (homooctomer), MT-ATP6/subunit a, MT-ATP8/subunit 8, ATP5ME/subunit e, ATP5MF/subunit f, ATP5MG/subunit g, ATP5MK/subunit k, ATP5MJ/subunit j, ATP5F1C/subunit gamma, ATP5F1D/subunit delta, ATP5F1E/subunit epsilon, ATP5PF/subunit F6, ATP5PB/subunit b, ATP5PD/subunit d, ATP5PO/subunit OSCP. ATP synthase complex consists of a soluble F(1) head domain (subunits alpha(3) and beta(3)) - the catalytic core - and a membrane F(0) domain - the membrane proton channel (subunits c, a, 8, e, f, g, k and j). These two domains are linked by a central stalk (subunits gamma, delta, and epsilon) rotating inside the F1 region and a stationary peripheral stalk (subunits F6, b, d, and OSCP).

It is found in the mitochondrion. Its subcellular location is the mitochondrion inner membrane. In terms of biological role, subunit b, of the mitochondrial membrane ATP synthase complex (F(1)F(0) ATP synthase or Complex V) that produces ATP from ADP in the presence of a proton gradient across the membrane which is generated by electron transport complexes of the respiratory chain. ATP synthase complex consist of a soluble F(1) head domain - the catalytic core - and a membrane F(1) domain - the membrane proton channel. These two domains are linked by a central stalk rotating inside the F(1) region and a stationary peripheral stalk. During catalysis, ATP synthesis in the catalytic domain of F(1) is coupled via a rotary mechanism of the central stalk subunits to proton translocation. In vivo, can only synthesize ATP although its ATP hydrolase activity can be activated artificially in vitro. Part of the complex F(0) domain. Part of the complex F(0) domain and the peripheric stalk, which acts as a stator to hold the catalytic alpha(3)beta(3) subcomplex and subunit a/ATP6 static relative to the rotary elements. The protein is ATP synthase peripheral stalk subunit b, mitochondrial of Bos taurus (Bovine).